Reading from the N-terminus, the 328-residue chain is Thiamine thiazole synthase (328 aa).

Residues alanine 87, 108 to 109 (EA), glycine 116, and valine 181 each bind substrate. At cysteine 215 the chain carries 2,3-didehydroalanine (Cys). Substrate is bound by residues aspartate 217, histidine 232, methionine 284, and 294-296 (RMG).

Belongs to the THI4 family. As to quaternary structure, homooctamer. Fe cation serves as cofactor. In terms of processing, during the catalytic reaction, a sulfide is transferred from Cys-215 to a reaction intermediate, generating a dehydroalanine residue.

The protein resides in the cytoplasm. It is found in the nucleus. It catalyses the reaction [ADP-thiazole synthase]-L-cysteine + glycine + NAD(+) = [ADP-thiazole synthase]-dehydroalanine + ADP-5-ethyl-4-methylthiazole-2-carboxylate + nicotinamide + 3 H2O + 2 H(+). In terms of biological role, involved in biosynthesis of the thiamine precursor thiazole. Catalyzes the conversion of NAD and glycine to adenosine diphosphate 5-(2-hydroxyethyl)-4-methylthiazole-2-carboxylic acid (ADT), an adenylated thiazole intermediate. The reaction includes an iron-dependent sulfide transfer from a conserved cysteine residue of the protein to a thiazole intermediate. The enzyme can only undergo a single turnover, which suggests it is a suicide enzyme. May have additional roles in adaptation to various stress conditions and in DNA damage tolerance. The protein is Thiamine thiazole synthase (thi2) of Schizosaccharomyces pombe (strain 972 / ATCC 24843) (Fission yeast).